The sequence spans 141 residues: Large-conductance mechanosensitive channel (141 aa).

A run of 3 helical transmembrane segments spans residues 17 to 37 (MDLA…ASIV), 40 to 60 (LIMP…LFIA), and 86 to 106 (GNFV…FIIV).

Belongs to the MscL family. Homopentamer.

The protein localises to the cell inner membrane. Channel that opens in response to stretch forces in the membrane lipid bilayer. May participate in the regulation of osmotic pressure changes within the cell. In Thiobacillus denitrificans (strain ATCC 25259 / T1), this protein is Large-conductance mechanosensitive channel.